Reading from the N-terminus, the 131-residue chain is Small ribosomal subunit protein uS8 (131 aa).

This sequence belongs to the universal ribosomal protein uS8 family. In terms of assembly, part of the 30S ribosomal subunit. Contacts proteins S5 and S12.

Its function is as follows. One of the primary rRNA binding proteins, it binds directly to 16S rRNA central domain where it helps coordinate assembly of the platform of the 30S subunit. The sequence is that of Small ribosomal subunit protein uS8 from Campylobacter fetus subsp. fetus (strain 82-40).